A 365-amino-acid chain; its full sequence is MANAKSSSLPSWKNPSGKTLLILLWALALALMALLSSWADMPWLSNGKLLIALGFTALVTALIGMAVVPMLVNLKASQVIQSDGPQSHLKKAGTPTMGGIFFVPVAVAIAVVGTQFNPDVIVVGLVTLGYMAIGWVDDWQILKYKSNKGLTPKQKLFLQVAIAVIFCTWLFFYGPTEITDIRIMQFVLPLGFLFWLVATFALVAESNATNLTDGVDGLAAGTGAIAFVGLGLLVAKENPALAFFCCAMAGGCIGFVHHNHNPARVFMGDTGSLALGGSLAAVGIMTGNLWGLLLISGIFLAESLSVIAQVGYYKATKGPDGVGKRLLKMAPIHHHLELSGWTETQIVGSFYLINTLLAIVAMATA.

10 consecutive transmembrane segments (helical) span residues 19-39 (TLLILLWALALALMALLSSWA), 49-69 (LLIALGFTALVTALIGMAVVP), 92-112 (AGTPTMGGIFFVPVAVAIAVV), 116-136 (FNPDVIVVGLVTLGYMAIGWV), 156-176 (LFLQVAIAVIFCTWLFFYGPT), 183-203 (IMQFVLPLGFLFWLVATFALV), 215-235 (VDGLAAGTGAIAFVGLGLLVA), 238-258 (NPALAFFCCAMAGGCIGFVHH), 279-299 (LAAVGIMTGNLWGLLLISGIF), and 345-365 (QIVGSFYLINTLLAIVAMATA).

The protein belongs to the glycosyltransferase 4 family. MraY subfamily. Mg(2+) is required as a cofactor.

It is found in the cell inner membrane. The catalysed reaction is UDP-N-acetyl-alpha-D-muramoyl-L-alanyl-gamma-D-glutamyl-meso-2,6-diaminopimeloyl-D-alanyl-D-alanine + di-trans,octa-cis-undecaprenyl phosphate = di-trans,octa-cis-undecaprenyl diphospho-N-acetyl-alpha-D-muramoyl-L-alanyl-D-glutamyl-meso-2,6-diaminopimeloyl-D-alanyl-D-alanine + UMP. The protein operates within cell wall biogenesis; peptidoglycan biosynthesis. In terms of biological role, catalyzes the initial step of the lipid cycle reactions in the biosynthesis of the cell wall peptidoglycan: transfers peptidoglycan precursor phospho-MurNAc-pentapeptide from UDP-MurNAc-pentapeptide onto the lipid carrier undecaprenyl phosphate, yielding undecaprenyl-pyrophosphoryl-MurNAc-pentapeptide, known as lipid I. The sequence is that of Phospho-N-acetylmuramoyl-pentapeptide-transferase from Synechocystis sp. (strain ATCC 27184 / PCC 6803 / Kazusa).